A 67-amino-acid chain; its full sequence is Large ribosomal subunit protein bL31 (67 aa).

This sequence belongs to the bacterial ribosomal protein bL31 family. Type A subfamily. As to quaternary structure, part of the 50S ribosomal subunit.

Functionally, binds the 23S rRNA. This Leptospira borgpetersenii serovar Hardjo-bovis (strain JB197) protein is Large ribosomal subunit protein bL31.